A 210-amino-acid chain; its full sequence is Thymidylate kinase (210 aa).

10-17 (GPEGAGKS) provides a ligand contact to ATP.

This sequence belongs to the thymidylate kinase family.

The enzyme catalyses dTMP + ATP = dTDP + ADP. In terms of biological role, phosphorylation of dTMP to form dTDP in both de novo and salvage pathways of dTTP synthesis. This chain is Thymidylate kinase, found in Pseudomonas paraeruginosa (strain DSM 24068 / PA7) (Pseudomonas aeruginosa (strain PA7)).